We begin with the raw amino-acid sequence, 141 residues long: MKPKGRIVGIDYGTKRIGLAMTDPLQLFASPVGTFEPGGLHHELRRIMQGDTVDLAVVGSPVCDDGSGNAMTAVVDRFVEELRAAFPDLRVERVDESHSSREASRILAASGKSRKVRREKGRLDSAAACVLLTRFLEENRG.

This sequence belongs to the YqgF nuclease family.

The protein resides in the cytoplasm. Functionally, could be a nuclease involved in processing of the 5'-end of pre-16S rRNA. In Chlorobium luteolum (strain DSM 273 / BCRC 81028 / 2530) (Pelodictyon luteolum), this protein is Putative pre-16S rRNA nuclease.